The following is a 479-amino-acid chain: Sulfate adenylyltransferase subunit 1 (479 aa).

Residues 25-239 (KSLLRFLTCG…EVLETVDIQR (215 aa)) enclose the tr-type G domain. Positions 34-41 (GSVDDGKS) are G1. 34-41 (GSVDDGKS) contributes to the GTP binding site. The tract at residues 92–96 (GITID) is G2. The tract at residues 113–116 (DTPG) is G3. GTP is bound by residues 113 to 117 (DTPGH) and 168 to 171 (NKMD). Residues 168–171 (NKMD) are G4. A G5 region spans residues 206-208 (SAL).

Belongs to the TRAFAC class translation factor GTPase superfamily. Classic translation factor GTPase family. CysN/NodQ subfamily. Heterodimer composed of CysD, the smaller subunit, and CysN.

It catalyses the reaction sulfate + ATP + H(+) = adenosine 5'-phosphosulfate + diphosphate. It participates in sulfur metabolism; hydrogen sulfide biosynthesis; sulfite from sulfate: step 1/3. With CysD forms the ATP sulfurylase (ATPS) that catalyzes the adenylation of sulfate producing adenosine 5'-phosphosulfate (APS) and diphosphate, the first enzymatic step in sulfur assimilation pathway. APS synthesis involves the formation of a high-energy phosphoric-sulfuric acid anhydride bond driven by GTP hydrolysis by CysN coupled to ATP hydrolysis by CysD. The protein is Sulfate adenylyltransferase subunit 1 of Salmonella typhimurium (strain LT2 / SGSC1412 / ATCC 700720).